We begin with the raw amino-acid sequence, 356 residues long: UDP-N-acetylglucosamine--N-acetylmuramyl-(pentapeptide) pyrophosphoryl-undecaprenol N-acetylglucosamine transferase (356 aa).

Residues 12–14, asparagine 120, arginine 163, serine 187, and glutamine 286 contribute to the UDP-N-acetyl-alpha-D-glucosamine site; that span reads SGG.

It belongs to the glycosyltransferase 28 family. MurG subfamily.

The protein localises to the cell inner membrane. It catalyses the reaction di-trans,octa-cis-undecaprenyl diphospho-N-acetyl-alpha-D-muramoyl-L-alanyl-D-glutamyl-meso-2,6-diaminopimeloyl-D-alanyl-D-alanine + UDP-N-acetyl-alpha-D-glucosamine = di-trans,octa-cis-undecaprenyl diphospho-[N-acetyl-alpha-D-glucosaminyl-(1-&gt;4)]-N-acetyl-alpha-D-muramoyl-L-alanyl-D-glutamyl-meso-2,6-diaminopimeloyl-D-alanyl-D-alanine + UDP + H(+). The protein operates within cell wall biogenesis; peptidoglycan biosynthesis. Cell wall formation. Catalyzes the transfer of a GlcNAc subunit on undecaprenyl-pyrophosphoryl-MurNAc-pentapeptide (lipid intermediate I) to form undecaprenyl-pyrophosphoryl-MurNAc-(pentapeptide)GlcNAc (lipid intermediate II). This chain is UDP-N-acetylglucosamine--N-acetylmuramyl-(pentapeptide) pyrophosphoryl-undecaprenol N-acetylglucosamine transferase, found in Pelagibacter ubique (strain HTCC1062).